Reading from the N-terminus, the 879-residue chain is Beta-alanyl-bioamine nonribosomal peptide synthetase ebony (879 aa).

The tract at residues 26 to 540 (FEEQQLRHAD…EHVPLLVNGK (515 aa)) is adenylation. In terms of domain architecture, Carrier spans 573–650 (EDLKLTARDL…EIIEKMAANH (78 aa)). The residue at position 611 (Ser-611) is an O-(pantetheine 4'-phosphoryl)serine. The interval 666–679 (LKMEAVPLRLEHRQ) is condensation. Glu-696 lines the dopamine pocket. Glu-696 lines the histamine pocket. Residues Thr-825 and Asn-827 each coordinate beta-alanine.

This sequence belongs to the NRP synthetase family. The cofactor is pantetheine 4'-phosphate. Mg(2+) is required as a cofactor. As to expression, expressed in the optic neuropils in the lamina and in distinct cells at the distal border of the medulla cortex (at protein level). Expressed in the protocerebrum and thoracic ganglia (at protein level). Expressed in antennal lobes, antennal nerves and subesophagic ganglion (at protein level). Specifically, expressed in epithelial glial cells of the medulla that surround the synaptic cleft of photoreceptor axonal endings (at protein level). Expressed in some cells in the cuticle.

The protein localises to the cytoplasm. It carries out the reaction histamine + beta-alanine + ATP = carcinine + AMP + diphosphate + H(+). The enzyme catalyses beta-alanine + ATP + H(+) = beta-alanyl-5'-AMP + diphosphate. The catalysed reaction is beta-alanyl-5'-AMP + holo-[peptidyl-carrier protein] = beta-alanyl-[peptidyl-carrier protein] + AMP + H(+). It catalyses the reaction beta-alanyl-[peptidyl-carrier protein] + histamine = carcinine + holo-[peptidyl-carrier protein] + H(+). It carries out the reaction dopamine + beta-alanine + ATP = beta-alanyl-dopamine + AMP + diphosphate + H(+). The enzyme catalyses beta-alanyl-[peptidyl-carrier protein] + dopamine = beta-alanyl-dopamine + holo-[peptidyl-carrier protein] + H(+). In terms of biological role, nonribosomal peptide synthase which is required for the regulation of histamine and dopamine levels in various tissues through their condensation with beta-alanine. In epithelial glial cells, plays an essential role in the inactivation of histamine, the main neurotransmitter in the optical nerve system, by catalyzing the conversion of histamine into carcinine. In the cuticle, catalyzes the condensation of beta-alanine with dopamine to form beta-alanyl-dopamine (NBAD), a metabolite involved in the pigmentation and sclerotization of the insect cuticle. Also, regulates the cuticular hydrocarbon composition in females. Acts downstream of the body clock to regulate circadian behavioral rhythms. Can also condense beta-alanine with biogenic amines tyramine, octopamine, and serotonin in vitro. The protein is Beta-alanyl-bioamine nonribosomal peptide synthetase ebony of Drosophila melanogaster (Fruit fly).